The following is a 646-amino-acid chain: MNPTQTLFSPGGNSPASSPASHPSSLFPQINNCRTIRDLSQIHAVFIKSGQMRDTLAAAEILRFCATSDLHHRDLDYAHKIFNQMPQRNCFSWNTIIRGFSESDEDKALIAITLFYEMMSDEFVEPNRFTFPSVLKACAKTGKIQEGKQIHGLALKYGFGGDEFVMSNLVRMYVMCGFMKDARVLFYKNIIEKDMVVMTDRRKRDGEIVLWNVMIDGYMRLGDCKAARMLFDKMRQRSVVSWNTMISGYSLNGFFKDAVEVFREMKKGDIRPNYVTLVSVLPAISRLGSLELGEWLHLYAEDSGIRIDDVLGSALIDMYSKCGIIEKAIHVFERLPRENVITWSAMINGFAIHGQAGDAIDCFCKMRQAGVRPSDVAYINLLTACSHGGLVEEGRRYFSQMVSVDGLEPRIEHYGCMVDLLGRSGLLDEAEEFILNMPIKPDDVIWKALLGACRMQGNVEMGKRVANILMDMVPHDSGAYVALSNMYASQGNWSEVSEMRLRMKEKDIRKDPGCSLIDIDGVLHEFVVEDDSHPKAKEINSMLVEISDKLRLAGYRPITTQVLLNLEEEDKENVLHYHSEKIATAFGLISTSPGKPIRIVKNLRICEDCHSSIKLISKVYKRKITVRDRKRFHHFQDGSCSCMDYW.

The disordered stretch occupies residues 1–24 (MNPTQTLFSPGGNSPASSPASHPS). A compositionally biased stretch (low complexity) spans 9-24 (SPGGNSPASSPASHPS). PPR repeat units follow at residues 54 to 88 (DTLA…MPQR), 89 to 126 (NCFS…FVEP), 127 to 161 (NRFT…GFGG), 162 to 197 (DEFV…DMVV), 207 to 237 (EIVL…MRQR), 238 to 272 (SVVS…DIRP), 273 to 307 (NYVT…GIRI), 308 to 338 (DDVL…LPRE), 339 to 373 (NVIT…GVRP), 374 to 409 (SDVA…GLEP), and 410 to 440 (RIEH…MPIK). Positions 445 to 520 (IWKALLGACR…DPGCSLIDID (76 aa)) are type E motif. Positions 521–551 (GVLHEFVVEDDSHPKAKEINSMLVEISDKLR) are type E(+) motif. The type DYW motif stretch occupies residues 552–646 (LAGYRPITTQ…DGSCSCMDYW (95 aa)).

Belongs to the PPR family. PCMP-H subfamily.

In Arabidopsis thaliana (Mouse-ear cress), this protein is Pentatricopeptide repeat-containing protein At5g48910 (PCMP-H38).